We begin with the raw amino-acid sequence, 183 residues long: Ribosome maturation factor RimM (183 aa).

The PRC barrel domain occupies 103-183; it reads EEGDYYWKDL…SIEVDWDPGF (81 aa).

It belongs to the RimM family. Binds ribosomal protein uS19.

The protein resides in the cytoplasm. Its function is as follows. An accessory protein needed during the final step in the assembly of 30S ribosomal subunit, possibly for assembly of the head region. Essential for efficient processing of 16S rRNA. May be needed both before and after RbfA during the maturation of 16S rRNA. It has affinity for free ribosomal 30S subunits but not for 70S ribosomes. The polypeptide is Ribosome maturation factor RimM (Escherichia coli O157:H7 (strain EC4115 / EHEC)).